Reading from the N-terminus, the 304-residue chain is UDP-N-acetylenolpyruvoylglucosamine reductase (304 aa).

Residues 33–198 (KVGGPVDILL…LRATFNLVNG (166 aa)) enclose the FAD-binding PCMH-type domain. Arg177 is a catalytic residue. The Proton donor role is filled by Ser227. Glu297 is an active-site residue.

Belongs to the MurB family. It depends on FAD as a cofactor.

It localises to the cytoplasm. The enzyme catalyses UDP-N-acetyl-alpha-D-muramate + NADP(+) = UDP-N-acetyl-3-O-(1-carboxyvinyl)-alpha-D-glucosamine + NADPH + H(+). Its pathway is cell wall biogenesis; peptidoglycan biosynthesis. Cell wall formation. The polypeptide is UDP-N-acetylenolpyruvoylglucosamine reductase (Clostridium beijerinckii (strain ATCC 51743 / NCIMB 8052) (Clostridium acetobutylicum)).